The sequence spans 213 residues: MRSNYIVIEGLEGAGKTTARNVVVETLEQLGIREMIFTREPGGTQLAEKLRSLVLDIKSVGDEVITEKAEVLMFYAARVQLVETVIKPALAKGTWVIGDRHDLSTQAYQGGGRGVDQTMLATLRDAVLGDFRPDLTLYLDVTPEVGLKRARARGELDRIEQESFDFFNRTRARYLELAAQDASIRTIDATQSLECVMADIRQTVTTWVKEQGA.

Residue 10-17 (GLEGAGKT) participates in ATP binding.

Belongs to the thymidylate kinase family.

It catalyses the reaction dTMP + ATP = dTDP + ADP. Functionally, phosphorylation of dTMP to form dTDP in both de novo and salvage pathways of dTTP synthesis. This Escherichia fergusonii (strain ATCC 35469 / DSM 13698 / CCUG 18766 / IAM 14443 / JCM 21226 / LMG 7866 / NBRC 102419 / NCTC 12128 / CDC 0568-73) protein is Thymidylate kinase.